The chain runs to 178 residues: uncharacterized protein (178 aa).

An N-terminal signal peptide occupies residues 1–23 (MTMFKKISVLFFTLILAGCSSWS).

This is an uncharacterized protein from Haemophilus influenzae (strain ATCC 51907 / DSM 11121 / KW20 / Rd).